Here is a 293-residue protein sequence, read N- to C-terminus: 4-hydroxy-tetrahydrodipicolinate synthase (293 aa).

Residue Thr44 coordinates pyruvate. Catalysis depends on Tyr132, which acts as the Proton donor/acceptor. The active-site Schiff-base intermediate with substrate is the Lys160. Ile204 is a binding site for pyruvate.

This sequence belongs to the DapA family. As to quaternary structure, homotetramer; dimer of dimers.

Its subcellular location is the cytoplasm. The enzyme catalyses L-aspartate 4-semialdehyde + pyruvate = (2S,4S)-4-hydroxy-2,3,4,5-tetrahydrodipicolinate + H2O + H(+). It participates in amino-acid biosynthesis; L-lysine biosynthesis via DAP pathway; (S)-tetrahydrodipicolinate from L-aspartate: step 3/4. In terms of biological role, catalyzes the condensation of (S)-aspartate-beta-semialdehyde [(S)-ASA] and pyruvate to 4-hydroxy-tetrahydrodipicolinate (HTPA). This is 4-hydroxy-tetrahydrodipicolinate synthase from Hyphomonas neptunium (strain ATCC 15444).